We begin with the raw amino-acid sequence, 398 residues long: Bifunctional enzyme IspD/IspF (398 aa).

The tract at residues 1 to 234 (MTNSPRTAAI…SRLMAALGDI (234 aa)) is 2-C-methyl-D-erythritol 4-phosphate cytidylyltransferase. The 2-C-methyl-D-erythritol 2,4-cyclodiphosphate synthase stretch occupies residues 235 to 398 (RTGTGYDVHA…LPWGADGLAG (164 aa)). The a divalent metal cation site is built by aspartate 241 and histidine 243. Residues 241–243 (DVH) and 267–268 (HS) each bind 4-CDP-2-C-methyl-D-erythritol 2-phosphate. An a divalent metal cation-binding site is contributed by histidine 275. 4-CDP-2-C-methyl-D-erythritol 2-phosphate is bound by residues 289–291 (DIG), 365–368 (TTSE), phenylalanine 372, and arginine 375.

This sequence in the N-terminal section; belongs to the IspD/TarI cytidylyltransferase family. IspD subfamily. The protein in the C-terminal section; belongs to the IspF family. Requires a divalent metal cation as cofactor.

The catalysed reaction is 2-C-methyl-D-erythritol 4-phosphate + CTP + H(+) = 4-CDP-2-C-methyl-D-erythritol + diphosphate. It catalyses the reaction 4-CDP-2-C-methyl-D-erythritol 2-phosphate = 2-C-methyl-D-erythritol 2,4-cyclic diphosphate + CMP. Its pathway is isoprenoid biosynthesis; isopentenyl diphosphate biosynthesis via DXP pathway; isopentenyl diphosphate from 1-deoxy-D-xylulose 5-phosphate: step 2/6. It participates in isoprenoid biosynthesis; isopentenyl diphosphate biosynthesis via DXP pathway; isopentenyl diphosphate from 1-deoxy-D-xylulose 5-phosphate: step 4/6. Functionally, bifunctional enzyme that catalyzes the formation of 4-diphosphocytidyl-2-C-methyl-D-erythritol from CTP and 2-C-methyl-D-erythritol 4-phosphate (MEP) (IspD), and catalyzes the conversion of 4-diphosphocytidyl-2-C-methyl-D-erythritol 2-phosphate (CDP-ME2P) to 2-C-methyl-D-erythritol 2,4-cyclodiphosphate (ME-CPP) with a corresponding release of cytidine 5-monophosphate (CMP) (IspF). This is Bifunctional enzyme IspD/IspF from Rhodopseudomonas palustris (strain ATCC BAA-98 / CGA009).